We begin with the raw amino-acid sequence, 642 residues long: Mini-chromosome maintenance complex-binding protein (642 aa).

Over residues 151-161 the composition is skewed to polar residues; that stretch reads ARVSPSTSYTP. The segment at 151 to 197 is disordered; it reads ARVSPSTSYTPSRHKRSYEDDDDMDLQPNKQKDQHAGARQAGSVGGL. Ser-154 is modified (phosphoserine). The residue at position 160 (Thr-160) is a Phosphothreonine. A phosphoserine mark is found at Ser-167 and Ser-298.

This sequence belongs to the MCMBP family. Interacts with the MCM complex: associates with the MCM3-7 complex which lacks MCM2, while it does not interact with the MCM complex when MCM2 is present (MCM2-7 complex). Interacts with the RPA complex, when composed of all RPA1, RPA2 and RPA3 components, but not with RPA1 or RPA2 alone.

Its subcellular location is the nucleus. In terms of biological role, associated component of the MCM complex that acts as a regulator of DNA replication. Binds to the MCM complex during late S phase and promotes the disassembly of the MCM complex from chromatin, thereby acting as a key regulator of pre-replication complex (pre-RC) unloading from replicated DNA. Can dissociate the MCM complex without addition of ATP; probably acts by destabilizing interactions of each individual subunits of the MCM complex. Required for sister chromatid cohesion. The sequence is that of Mini-chromosome maintenance complex-binding protein (MCMBP) from Homo sapiens (Human).